The following is a 44-amino-acid chain: Phosphatase RapE inhibitor (44 aa).

Propeptides lie at residues 1 to 30 (MKSK…MKEA) and 36 to 44 (LAPTHEFLV).

This sequence belongs to the Phr family. In terms of processing, contains a predicted signal peptide cleavage site in the N-terminal region, however the propeptide is probably only subject to processing events at the ends of the mature peptide.

It localises to the secreted. The protein resides in the cytoplasm. In terms of biological role, signaling molecule involved in the regulation of sporulation. Secreted during production, but the mature peptide acts intracellularly, indicating that it needs to be imported into the cell to function. Inhibitor of the RapE phosphatase activity. Does not inhibit the phosphatase activity of RapA and RapB. Probably plays a dispensable role in the overall context of sporulation initiation. This is Phosphatase RapE inhibitor (phrE) from Bacillus subtilis (strain 168).